The primary structure comprises 575 residues: 2-isopropylmalate synthase (575 aa).

A Pyruvate carboxyltransferase domain is found at 40–314 (PRWCAVDLRD…DPQIDFSDID (275 aa)). Positions 49, 253, 255, and 289 each coordinate Mg(2+). The interval 456 to 575 (SGSGTPEWGR…IVSAVNRALR (120 aa)) is regulatory domain.

It belongs to the alpha-IPM synthase/homocitrate synthase family. LeuA type 2 subfamily. In terms of assembly, homodimer. Mg(2+) is required as a cofactor.

It localises to the cytoplasm. It carries out the reaction 3-methyl-2-oxobutanoate + acetyl-CoA + H2O = (2S)-2-isopropylmalate + CoA + H(+). Its pathway is amino-acid biosynthesis; L-leucine biosynthesis; L-leucine from 3-methyl-2-oxobutanoate: step 1/4. Functionally, catalyzes the condensation of the acetyl group of acetyl-CoA with 3-methyl-2-oxobutanoate (2-ketoisovalerate) to form 3-carboxy-3-hydroxy-4-methylpentanoate (2-isopropylmalate). The polypeptide is 2-isopropylmalate synthase (Kineococcus radiotolerans (strain ATCC BAA-149 / DSM 14245 / SRS30216)).